The sequence spans 434 residues: ATP-dependent protease ATPase subunit HslU (434 aa).

ATP contacts are provided by residues isoleucine 18, 60–65 (GVGKTE), aspartate 247, glutamate 312, and arginine 384.

Belongs to the ClpX chaperone family. HslU subfamily. A double ring-shaped homohexamer of HslV is capped on each side by a ring-shaped HslU homohexamer. The assembly of the HslU/HslV complex is dependent on binding of ATP.

It localises to the cytoplasm. In terms of biological role, ATPase subunit of a proteasome-like degradation complex; this subunit has chaperone activity. The binding of ATP and its subsequent hydrolysis by HslU are essential for unfolding of protein substrates subsequently hydrolyzed by HslV. HslU recognizes the N-terminal part of its protein substrates and unfolds these before they are guided to HslV for hydrolysis. This chain is ATP-dependent protease ATPase subunit HslU, found in Brucella ovis (strain ATCC 25840 / 63/290 / NCTC 10512).